Reading from the N-terminus, the 453-residue chain is Crh-like protein CRH11 (453 aa).

A signal peptide spans 1–21 (MKFTTLATIASTLLFAANANA). Residues Cys24 and Cys32 are joined by a disulfide bond. Positions 28-227 (KSSDCSPVPA…WAGGITDYSQ (200 aa)) constitute a GH16 domain. Glu119 acts as the Nucleophile in catalysis. Glu123 (proton donor) is an active-site residue. 3 residues coordinate chitin: Glu123, Trp204, and Thr215. Disordered regions lie at residues 281-343 (LESG…SEKS), 362-397 (KTTVTSSSGVSVPTSASVSTAAGTTSGSANSAPASA), and 410-430 (GDAAPSSSASEKPSVSTTENN). Low complexity-rich tracts occupy residues 286-343 (SVDS…SEKS), 363-397 (TTVTSSSGVSVPTSASVSTAAGTTSGSANSAPASA), and 412-425 (AAPSSSASEKPSVS). Residue Asn290 is glycosylated (N-linked (GlcNAc...) asparagine). Asn430 carries the GPI-anchor amidated asparagine lipid modification. Positions 431–453 (GAVSVAKTTSLFGFVALIGFLFV) are cleaved as a propeptide — removed in mature form.

It belongs to the glycosyl hydrolase 16 family. CRH1 subfamily. Post-translationally, the GPI-anchor is attached to the protein in the endoplasmic reticulum and serves to target the protein to the cell surface. There, the glucosamine-inositol phospholipid moiety is cleaved off and the GPI-modified mannoprotein is covalently attached via its lipidless GPI glycan remnant to the 1,6-beta-glucan of the outer cell wall layer.

The protein localises to the secreted. Its subcellular location is the cell wall. The protein resides in the membrane. The enzyme catalyses Random endo-hydrolysis of N-acetyl-beta-D-glucosaminide (1-&gt;4)-beta-linkages in chitin and chitodextrins.. Dual chitinase/transglycosylase that plays a role in cell wall architecture. Chitinase and transglycosylase activities are coupled. Required for the polysaccharide cross-linking at the septa and the cell wall. More specifically, transfers chitin to 1,6-beta-glucan in the cell wall. Plays an important role in fungal pathogenesis via its functions in cell wall assembly and regeneration, filamentation, and adherence to host cells. This chain is Crh-like protein CRH11 (CRH11), found in Candida albicans (strain SC5314 / ATCC MYA-2876) (Yeast).